A 249-amino-acid chain; its full sequence is Ribonuclease PH (249 aa).

Phosphate-binding positions include Arg86 and 124–126 (GTR).

This sequence belongs to the RNase PH family. In terms of assembly, homohexameric ring arranged as a trimer of dimers.

It catalyses the reaction tRNA(n+1) + phosphate = tRNA(n) + a ribonucleoside 5'-diphosphate. Its function is as follows. Phosphorolytic 3'-5' exoribonuclease that plays an important role in tRNA 3'-end maturation. Removes nucleotide residues following the 3'-CCA terminus of tRNAs; can also add nucleotides to the ends of RNA molecules by using nucleoside diphosphates as substrates, but this may not be physiologically important. Probably plays a role in initiation of 16S rRNA degradation (leading to ribosome degradation) during starvation. The chain is Ribonuclease PH from Clostridium botulinum (strain Eklund 17B / Type B).